Here is a 308-residue protein sequence, read N- to C-terminus: Tetraacyldisaccharide 4'-kinase (308 aa).

Residue 63–70 (SFGGNGKT) coordinates ATP.

The protein belongs to the LpxK family.

It carries out the reaction a lipid A disaccharide + ATP = a lipid IVA + ADP + H(+). Its pathway is glycolipid biosynthesis; lipid IV(A) biosynthesis; lipid IV(A) from (3R)-3-hydroxytetradecanoyl-[acyl-carrier-protein] and UDP-N-acetyl-alpha-D-glucosamine: step 6/6. Its function is as follows. Transfers the gamma-phosphate of ATP to the 4'-position of a tetraacyldisaccharide 1-phosphate intermediate (termed DS-1-P) to form tetraacyldisaccharide 1,4'-bis-phosphate (lipid IVA). This chain is Tetraacyldisaccharide 4'-kinase, found in Campylobacter jejuni subsp. jejuni serotype O:6 (strain 81116 / NCTC 11828).